Consider the following 210-residue polypeptide: Protein-L-isoaspartate O-methyltransferase (210 aa).

Residue Ser-54 is part of the active site.

Belongs to the methyltransferase superfamily. L-isoaspartyl/D-aspartyl protein methyltransferase family.

It localises to the cytoplasm. The enzyme catalyses [protein]-L-isoaspartate + S-adenosyl-L-methionine = [protein]-L-isoaspartate alpha-methyl ester + S-adenosyl-L-homocysteine. Catalyzes the methyl esterification of L-isoaspartyl residues in peptides and proteins that result from spontaneous decomposition of normal L-aspartyl and L-asparaginyl residues. It plays a role in the repair and/or degradation of damaged proteins. The sequence is that of Protein-L-isoaspartate O-methyltransferase from Methanothrix thermoacetophila (strain DSM 6194 / JCM 14653 / NBRC 101360 / PT) (Methanosaeta thermophila).